Here is a 172-residue protein sequence, read N- to C-terminus: Adenylate kinase isoenzyme 6 (172 aa).

Residues Gly13, Gly15, Lys16, Thr17, and Thr18 each coordinate ATP. Residues 33–56 (NVGDLAREGHLYDGYDEEYGCPIL) are NMPbind. An LID region spans residues 108 to 118 (TRGYHEKKLQD). Arg109 contributes to the ATP binding site.

This sequence belongs to the adenylate kinase family. AK6 subfamily. Monomer and homodimer. Interacts with small ribosomal subunit protein uS11. Not a structural component of 43S pre-ribosomes, but transiently interacts with them by binding to uS11. Interacts with COIL (via C-terminus).

The protein localises to the cytoplasm. The protein resides in the nucleus. It is found in the nucleoplasm. Its subcellular location is the cajal body. The enzyme catalyses AMP + ATP = 2 ADP. It carries out the reaction ATP + H2O = ADP + phosphate + H(+). Its function is as follows. Broad-specificity nucleoside monophosphate (NMP) kinase that catalyzes the reversible transfer of the terminal phosphate group between nucleoside triphosphates and monophosphates. Also has ATPase activity. Involved in the late cytoplasmic maturation steps of the 40S ribosomal particles, specifically 18S rRNA maturation. While NMP activity is not required for ribosome maturation, ATPase activity is. Associates transiently with small ribosomal subunit protein uS11. ATP hydrolysis breaks the interaction with uS11. May temporarily remove uS11 from the ribosome to enable a conformational change of the ribosomal RNA that is needed for the final maturation step of the small ribosomal subunit. Its NMP activity may have a role in nuclear energy homeostasis. May be involved in regulation of Cajal body (CB) formation. The chain is Adenylate kinase isoenzyme 6 from Rattus norvegicus (Rat).